A 429-amino-acid polypeptide reads, in one-letter code: Uracil permease (429 aa).

The Cytoplasmic segment spans residues Met1 to Pro13. The helical transmembrane segment at Leu14–Val37 threads the bilayer. Residues Leu38 to Ile41 are Periplasmic-facing. A helical transmembrane segment spans residues Asn42–Cys61. Residues Lys62–Lys64 lie on the Cytoplasmic side of the membrane. A discontinuously helical membrane pass occupies residues Ile65–Leu81. A uracil-binding site is contributed by Phe73. Residues Leu82–Val89 lie on the Periplasmic side of the membrane. A helical transmembrane segment spans residues Ala90 to Lys110. The Cytoplasmic portion of the chain corresponds to Ala111–Pro122. The helical transmembrane segment at Ala123–Ala144 threads the bilayer. The Periplasmic portion of the chain corresponds to Gly145 to Asp155. The chain crosses the membrane as a helical span at residues Ser156–Leu171. Residues Gly172–Gly178 lie on the Cytoplasmic side of the membrane. The helical transmembrane segment at Phe179–Met199 threads the bilayer. The Periplasmic segment spans residues Gly200–Glu224. A helical membrane pass occupies residues Trp225–Val248. Glu241 is a binding site for uracil. At Thr249 to Pro261 the chain is on the cytoplasmic side. A helical transmembrane segment spans residues Gly262–Gly281. The discontinuously helical transmembrane segment at Ser282–Thr298 threads the bilayer. The uracil site is built by Gly289 and Glu290. The Cytoplasmic portion of the chain corresponds to Arg299–Tyr301. Residues Ser302–Val319 traverse the membrane as a helical segment. The Periplasmic segment spans residues Gly320–Pro332. The helical transmembrane segment at Val333 to Ile354 threads the bilayer. Over Glu355–Asn365 the chain is Cytoplasmic. An intramembrane region (discontinuously helical) is located at residues Leu366–Gly401. Residues Leu402 to Lys429 lie on the Cytoplasmic side of the membrane.

Belongs to the nucleobase:cation symporter-2 (NCS2) (TC 2.A.40) family.

The protein resides in the cell inner membrane. The enzyme catalyses uracil(in) + H(+)(in) = uracil(out) + H(+)(out). Its function is as follows. Transport of uracil in the cell. The polypeptide is Uracil permease (uraA) (Escherichia coli O157:H7).